Reading from the N-terminus, the 115-residue chain is Selenoprotein K homolog (115 aa).

Residues 29–49 form a helical membrane-spanning segment; sequence FIWGILNQITFFFSTLIGGTV. Positions 48-115 are disordered; sequence TVEPRRRPNN…NSASGSUGPK (68 aa). Positions 58 to 84 are enriched in gly residues; sequence QGGGRRLAGFDGNGNVTGGSGVGGSGP. Residues 104–115 show a composition bias toward polar residues; the sequence is ACNSASGSUGPK. Selenocysteine 112 is a non-standard amino acid (selenocysteine).

Belongs to the selenoprotein K family.

The protein localises to the membrane. This Dictyostelium discoideum (Social amoeba) protein is Selenoprotein K homolog (selk).